A 489-amino-acid polypeptide reads, in one-letter code: MSNAALQVYGGDEVSAVVIDPGSYTTNIGYSGSDFPQSILPSVYGKYTADEGNKKIFSEQSIGIPRKDYELKPIIENGLVIDWDTAQEQWQWALQNELYLNSNSGIPALLTEPVWNSTENRKKSLEVLLEGMQFEACYLAPTSTCVSFAAGRPNCLVVDIGHDTCSVSPIVDGMTLSKSTRRNFIAGKFINHLIKKALEPKEIIPLFAIKQRKPEFIKKTFDYEVDKSLYDYANNRGFFQECKETLCHICPTKTLEETKTELSSTAKRSIESPWNEEIVFDNETRYGFAEELFLPKEDDIPANWPRSNSGVVKTWRNDYVPLKRTKPSGVNKSDKKVTPTEEKEQEAVSKSTSPAANSADTPNETGKRPLEEEKPPKENNELIGLADLVYSSIMSSDVDLRATLAHNVVLTGGTSSIPGLSDRLMTELNKILPSLKFRILTTGHTIERQYQSWLGGSILTSLGTFHQLWVGKKEYEEVGVERLLNDRFR.

The segment at 323 to 379 (KRTKPSGVNKSDKKVTPTEEKEQEAVSKSTSPAANSADTPNETGKRPLEEEKPPKEN) is disordered. Residues 332–347 (KSDKKVTPTEEKEQEA) are compositionally biased toward basic and acidic residues. The segment covering 348–364 (VSKSTSPAANSADTPNE) has biased composition (polar residues). A Phosphoserine modification is found at Ser-349. A compositionally biased stretch (basic and acidic residues) spans 365 to 379 (TGKRPLEEEKPPKEN).

It belongs to the actin family. ARP4 subfamily. In terms of assembly, component of the NuA4 histone acetyltransferase complex composed of at least ACT1, ARP4, EAF3, EAF5, EAF6, EAF7, EPL1, ESA1, SWC4, TRA1, VID21, YAF9 and YNG2. Component of the chromatin-remodeling INO80 complex, at least composed of ARP4, ARP5, ARP8, RVB1, RVB2, TAF14, NHP10, IES1, IES3, IES4, IES6, ACT1, IES2, IES5 and INO80. Component of the SWR1 chromatin remodeling complex composed of at least ACT1, ARP4, RVB1, RVB2, ARP6, YAF9, VPS71, VPS72, SWC3, SWC4, SWC5, SWC7 and SWR1, and perhaps BDF1. Interacts with histones H4 (HHF1 and HHF2), H3 (HHT1 and HHT2) and H2A (HTA1 and HTA2).

It localises to the nucleus. In terms of biological role, chromatin interaction component of the NuA4 histone acetyltransferase complex which is involved in transcriptional activation of selected genes principally by acetylation of nucleosomal histone H4 and H2A. The NuA4 complex is also involved in DNA repair. ARP4 recognizes H2AS128ph (gamma-H2A) and is required for NuA4 complex integrity. Component of the SWR1 complex which mediates the ATP-dependent exchange of histone H2A for the H2A variant HZT1 leading to transcriptional regulation of selected genes by chromatin remodeling. Component of the INO80 complex which remodels chromatin by shifting nucleosomes. Its ability to induce transcription of some phosphate-responsive genes is modulated by inositol polyphosphates. The INO80 complex is involved in DNA repair by associating to gamma-H2A as a response to DNA damage. The polypeptide is Actin-related protein 4 (ARP4) (Saccharomyces cerevisiae (strain ATCC 204508 / S288c) (Baker's yeast)).